Here is a 669-residue protein sequence, read N- to C-terminus: Bestrophin-3 (669 aa).

The Cytoplasmic portion of the chain corresponds to Met1–Leu31. A Ca(2+)-binding site is contributed by Ala10. A helical membrane pass occupies residues Leu32–Arg51. The Extracellular segment spans residues Leu52–Arg60. A helical membrane pass occupies residues Tyr61–Leu82. The Cytoplasmic portion of the chain corresponds to Gly83–Thr237. The chain crosses the membrane as a helical span at residues Gln238–Arg255. Topologically, residues Gln256–Pro274 are extracellular. The helical transmembrane segment at Ile275 to Leu288 threads the bilayer. At Lys289 to Phe669 the chain is on the cytoplasmic side. Residues Gln293, Asn296, Asp301, and Asp304 each contribute to the Ca(2+) site. Disordered regions lie at residues Leu399–Pro496, Gln533–Thr560, Thr591–Ser627, and Ile646–Phe669. Residues Asn440–Ser451 show a composition bias toward basic residues. Residues Arg475–Pro492 show a composition bias toward low complexity. Residues Gln533–Pro543 are compositionally biased toward polar residues. The span at Ile646–Glu656 shows a compositional bias: basic and acidic residues.

This sequence belongs to the anion channel-forming bestrophin (TC 1.A.46) family. Calcium-sensitive chloride channel subfamily. As to expression, expressed in heart. In terms of tissue distribution, expressed in brain, retina/retinal pigment epithelium (RPE) and skeletal muscle. Expressed in acinar cells of parotid glands. Expressed in lung, kidney and testis.

It localises to the cell membrane. The catalysed reaction is chloride(in) = chloride(out). Functionally, ligand-gated anion channel that allows the movement of chloride monoatomic anions across cell membranes when activated by calcium (Ca2+). Its function is as follows. Does not function as calcium-gated chloride channel. The chain is Bestrophin-3 (Best3) from Mus musculus (Mouse).